A 405-amino-acid polypeptide reads, in one-letter code: MAVGLGPLPTLHPVAGFELGIASAGIKRPGRKDVVVMRCAEGSTVAGVFTLNAFCAAPVILAKQRVQGPVRYLLTNTGNANAGTGEPGLAAASRTCAKLAELTGVDASAVLPYSTGVIGEPLPVEKIEGALQAALDDLSVDNWAAAATGIMTTDTLPKGASRQFQHDGVTITVTGISKGAGMIRPNMATMLGYIATDAKVSREVLQNLLLDGANKSFNRITIDGDTSTNDCCMLIATGQAKLPEITKAEGPLFAALKQAVFEVCMEVAQAIVRDGEGATKFVTVEVNGGATYQECLDVGYTVAHSPLIKTALFASDPNWGRILAAVGRAGVPDLDVSKIDVFLGEVCIASRGARAASYTEAQGAAVMQQEEITIRIELGRGACSETIWTTDLSHEYVKINAEYRT.

Residues Thr-152, Lys-178, Thr-189, Glu-276, Asn-400, and Thr-405 each contribute to the substrate site. Thr-189 functions as the Nucleophile in the catalytic mechanism.

This sequence belongs to the ArgJ family. In terms of assembly, heterotetramer of two alpha and two beta chains.

It is found in the cytoplasm. It catalyses the reaction N(2)-acetyl-L-ornithine + L-glutamate = N-acetyl-L-glutamate + L-ornithine. The catalysed reaction is L-glutamate + acetyl-CoA = N-acetyl-L-glutamate + CoA + H(+). It participates in amino-acid biosynthesis; L-arginine biosynthesis; L-ornithine and N-acetyl-L-glutamate from L-glutamate and N(2)-acetyl-L-ornithine (cyclic): step 1/1. Its pathway is amino-acid biosynthesis; L-arginine biosynthesis; N(2)-acetyl-L-ornithine from L-glutamate: step 1/4. Its function is as follows. Catalyzes two activities which are involved in the cyclic version of arginine biosynthesis: the synthesis of N-acetylglutamate from glutamate and acetyl-CoA as the acetyl donor, and of ornithine by transacetylation between N(2)-acetylornithine and glutamate. The polypeptide is Arginine biosynthesis bifunctional protein ArgJ (Pseudomonas fluorescens (strain ATCC BAA-477 / NRRL B-23932 / Pf-5)).